A 280-amino-acid polypeptide reads, in one-letter code: Golgi phosphoprotein 3-like B (280 aa).

The disordered stretch occupies residues 1 to 32 (MTTLIRRGRRAEEGQERRADSEDSIKDKDEED). Over residues 10 to 32 (RAEEGQERRADSEDSIKDKDEED) the composition is skewed to basic and acidic residues. The a 1,2-diacyl-sn-glycero-3-phospho-(1D-myo-inositol 4-phosphate) site is built by Trp62, Arg71, Arg152, and Arg155. Residues 171–182 (EKQNFLLFDMTT) are beta-hairpin required for oligomerization.

It belongs to the GOLPH3/VPS74 family. Homooligomer.

Its subcellular location is the golgi apparatus. It is found in the golgi stack membrane. The protein localises to the trans-Golgi network membrane. Its function is as follows. Phosphatidylinositol-4-phosphate-binding protein that may play a role in the process of vesicle budding at the Golgi and anterograde transport to the plasma membrane. In Xenopus laevis (African clawed frog), this protein is Golgi phosphoprotein 3-like B (golph3l-b).